Here is an 803-residue protein sequence, read N- to C-terminus: Leucine--tRNA ligase (803 aa).

The 'HIGH' region signature appears at 40-51 (PYPSGQGLHVGH). The 'KMSKS' region signature appears at 575–579 (KMSKS). Residue Lys-578 participates in ATP binding.

Belongs to the class-I aminoacyl-tRNA synthetase family.

It is found in the cytoplasm. It catalyses the reaction tRNA(Leu) + L-leucine + ATP = L-leucyl-tRNA(Leu) + AMP + diphosphate. This chain is Leucine--tRNA ligase, found in Lacticaseibacillus paracasei (strain ATCC 334 / BCRC 17002 / CCUG 31169 / CIP 107868 / KCTC 3260 / NRRL B-441) (Lactobacillus paracasei).